The chain runs to 122 residues: Anti-sigma-F factor antagonist RsfB (122 aa).

The STAS domain occupies 7-115; that stretch reads ITVTVADHNG…STLHDALTGV (109 aa). S61 carries the phosphoserine modification.

It belongs to the anti-sigma-factor antagonist family. As to quaternary structure, interacts with anti-sigma-F factor RsbW (UsfX). Its phosphorylation may prevent this interaction. Post-translationally, putative phosphorylation on Ser-61 may prevent interaction with RsbW.

In terms of biological role, positive regulator of sigma-F (SigF) activity. Binds to anti-sigma-F factor RsbW (UsfX) preventing its binding to SigF, thus activating transcription. This chain is Anti-sigma-F factor antagonist RsfB (rsfB), found in Mycobacterium tuberculosis (strain CDC 1551 / Oshkosh).